The primary structure comprises 290 residues: Acetyl-coenzyme A carboxylase carboxyl transferase subunit beta (290 aa).

The 264-residue stretch at 27–290 folds into the CoA carboxyltransferase N-terminal domain; sequence LWIKCPSCEA…LTRQPADAVA (264 aa). The Zn(2+) site is built by C31, C34, C50, and C53. Residues 31-53 form a C4-type zinc finger; sequence CPSCEAVLYRNDVEANLHVCPKC.

This sequence belongs to the AccD/PCCB family. Acetyl-CoA carboxylase is a heterohexamer composed of biotin carboxyl carrier protein (AccB), biotin carboxylase (AccC) and two subunits each of ACCase subunit alpha (AccA) and ACCase subunit beta (AccD). Zn(2+) is required as a cofactor.

Its subcellular location is the cytoplasm. The enzyme catalyses N(6)-carboxybiotinyl-L-lysyl-[protein] + acetyl-CoA = N(6)-biotinyl-L-lysyl-[protein] + malonyl-CoA. It participates in lipid metabolism; malonyl-CoA biosynthesis; malonyl-CoA from acetyl-CoA: step 1/1. In terms of biological role, component of the acetyl coenzyme A carboxylase (ACC) complex. Biotin carboxylase (BC) catalyzes the carboxylation of biotin on its carrier protein (BCCP) and then the CO(2) group is transferred by the transcarboxylase to acetyl-CoA to form malonyl-CoA. The protein is Acetyl-coenzyme A carboxylase carboxyl transferase subunit beta of Paraburkholderia phymatum (strain DSM 17167 / CIP 108236 / LMG 21445 / STM815) (Burkholderia phymatum).